A 62-amino-acid chain; its full sequence is 6.7 kDa chloroplast outer envelope membrane protein (62 aa).

Residues 1–17 (MESVAKPATTKEGSAKQ) lie on the Chloroplast intermembrane side of the membrane. A helical membrane pass occupies residues 18–40 (AAIVVGVLALGWFAIQVAFIPLF). Residues 41–62 (NKVRGGGSDKKDDDVNAFTPDT) lie on the Cytoplasmic side of the membrane.

The protein localises to the plastid. Its subcellular location is the chloroplast outer membrane. The protein is 6.7 kDa chloroplast outer envelope membrane protein of Spinacia oleracea (Spinach).